Reading from the N-terminus, the 208-residue chain is Anthranilate synthase component 2 (208 aa).

The Glutamine amidotransferase type-1 domain maps to 3–208 (HVVLIDNHDS…SRCVEQLLAN (206 aa)). 53-55 (GPG) serves as a coordination point for L-glutamine. Catalysis depends on cysteine 80, which acts as the Nucleophile; for GATase activity. Residues glutamine 84 and 145–146 (SL) contribute to the L-glutamine site. Catalysis depends on for GATase activity residues histidine 185 and glutamate 187.

As to quaternary structure, heterotetramer consisting of two non-identical subunits: a beta subunit (TrpG) and a large alpha subunit (TrpE).

The catalysed reaction is chorismate + L-glutamine = anthranilate + pyruvate + L-glutamate + H(+). The protein operates within amino-acid biosynthesis; L-tryptophan biosynthesis; L-tryptophan from chorismate: step 1/5. In terms of biological role, part of a heterotetrameric complex that catalyzes the two-step biosynthesis of anthranilate, an intermediate in the biosynthesis of L-tryptophan. In the first step, the glutamine-binding beta subunit (TrpG) of anthranilate synthase (AS) provides the glutamine amidotransferase activity which generates ammonia as a substrate that, along with chorismate, is used in the second step, catalyzed by the large alpha subunit of AS (TrpE) to produce anthranilate. In the absence of TrpG, TrpE can synthesize anthranilate directly from chorismate and high concentrations of ammonia. The protein is Anthranilate synthase component 2 (trpG) of Corynebacterium glutamicum (strain ATCC 13032 / DSM 20300 / JCM 1318 / BCRC 11384 / CCUG 27702 / LMG 3730 / NBRC 12168 / NCIMB 10025 / NRRL B-2784 / 534).